Here is a 303-residue protein sequence, read N- to C-terminus: Terpene synthase (303 aa).

2 residues coordinate Mg(2+): Asp69 and Asp73. Positions 69 to 73 (DDIQD) match the DDXXD motif motif.

This sequence belongs to the FPP/GGPP synthase family. The cofactor is Mg(2+).

The enzyme catalyses (2E)-geranyl diphosphate + H2O = (2E)-geraniol + diphosphate. In terms of biological role, terpene synthase that is able to convert geraniol diphosphate to geraniol in tea leaves. This is Terpene synthase from Matsumurasca onukii (Tea green leafhopper).